Consider the following 461-residue polypeptide: Asparagine--tRNA ligase (461 aa).

This sequence belongs to the class-II aminoacyl-tRNA synthetase family. As to quaternary structure, homodimer.

Its subcellular location is the cytoplasm. It carries out the reaction tRNA(Asn) + L-asparagine + ATP = L-asparaginyl-tRNA(Asn) + AMP + diphosphate + H(+). This Geotalea uraniireducens (strain Rf4) (Geobacter uraniireducens) protein is Asparagine--tRNA ligase.